The chain runs to 1024 residues: Beta-galactosidase (1024 aa).

Positions 103 and 202 each coordinate substrate. Asp202 is a binding site for Na(+). Glu417, His419, and Glu462 together coordinate Mg(2+). Substrate-binding positions include Glu462 and 538-541 (EYAH). Glu462 functions as the Proton donor in the catalytic mechanism. Glu538 serves as the catalytic Nucleophile. Asn598 is a Mg(2+) binding site. Residues Phe602 and Asn605 each contribute to the Na(+) site. Asn605 and Trp1000 together coordinate substrate.

Belongs to the glycosyl hydrolase 2 family. In terms of assembly, homotetramer. Mg(2+) serves as cofactor. It depends on Na(+) as a cofactor.

It catalyses the reaction Hydrolysis of terminal non-reducing beta-D-galactose residues in beta-D-galactosides.. The protein is Beta-galactosidase of Escherichia coli O9:H4 (strain HS).